A 124-amino-acid chain; its full sequence is Small ribosomal subunit protein uS12 (124 aa).

Asp-89 is subject to 3-methylthioaspartic acid. The segment at 105-124 is disordered; that stretch reads QGVKNRKQARSRYGAKKEKS. Over residues 108–118 the composition is skewed to basic residues; sequence KNRKQARSRYG.

The protein belongs to the universal ribosomal protein uS12 family. Part of the 30S ribosomal subunit. Contacts proteins S8 and S17. May interact with IF1 in the 30S initiation complex.

With S4 and S5 plays an important role in translational accuracy. In terms of biological role, interacts with and stabilizes bases of the 16S rRNA that are involved in tRNA selection in the A site and with the mRNA backbone. Located at the interface of the 30S and 50S subunits, it traverses the body of the 30S subunit contacting proteins on the other side and probably holding the rRNA structure together. The combined cluster of proteins S8, S12 and S17 appears to hold together the shoulder and platform of the 30S subunit. In Mycobacterium sp. (strain JLS), this protein is Small ribosomal subunit protein uS12.